Reading from the N-terminus, the 77-residue chain is Small ribosomal subunit protein bS18 (77 aa).

Belongs to the bacterial ribosomal protein bS18 family. Part of the 30S ribosomal subunit. Forms a tight heterodimer with protein bS6.

Its function is as follows. Binds as a heterodimer with protein bS6 to the central domain of the 16S rRNA, where it helps stabilize the platform of the 30S subunit. The sequence is that of Small ribosomal subunit protein bS18 from Bacillus cytotoxicus (strain DSM 22905 / CIP 110041 / 391-98 / NVH 391-98).